Consider the following 758-residue polypeptide: Ribosomal RNA processing protein 1 homolog B (758 aa).

Ser-245 bears the Phosphoserine mark. Over residues 259 to 272 (AVSKKKTALGKNHS) the composition is skewed to basic residues. The disordered stretch occupies residues 259–285 (AVSKKKTALGKNHSRKDGLSDERGRDD). A compositionally biased stretch (basic and acidic residues) spans 273–285 (RKDGLSDERGRDD). Phosphoserine occurs at positions 350, 392, 394, and 395. Positions 381–598 (GSRVFCVEEE…KTASLKKRKK (218 aa)) are disordered. Positions 397 to 408 (QKRRRKKKKKHH) are enriched in basic residues. Positions 447–457 (GAEATSSTGEE) are enriched in low complexity. 2 positions are modified to phosphoserine: Ser-452 and Ser-458. Residues 469–481 (HNKRKRPRKKSPR) show a composition bias toward basic residues. Positions 498-513 (SQSGPSGSHPQGPRGS) are enriched in low complexity. Ser-513 is modified (phosphoserine). The span at 566-575 (QRRRLQKKKA) shows a compositional bias: basic residues. Ser-579 bears the Phosphoserine mark. N6-acetyllysine is present on Lys-652. Residues 660–681 (KSSTATHPPGPAVQLNKTPSSS) are disordered. Ser-702 and Ser-706 each carry phosphoserine. The interval 707–758 (PTGPSRVAFDPEQKPLHGVLKTPTSSPASSPLVAKKPLTTTPRRRPRAMDFF) is disordered. Arg-712 carries the citrulline modification. Thr-728 carries the phosphothreonine modification. Phosphoserine is present on residues Ser-732, Ser-735, and Ser-736.

This sequence belongs to the RRP1 family. In terms of assembly, interacts with the transcriptional activator E2F1. Interacts with serine/threonine-protein phosphatase PP1 subunits PPP1CB and PPP1CC but not with PPP1CA. Interacts with 60S ribosomal proteins RPL5 and RPL27, ribosomal processing protein RRP1/NNP1 and other nucleolar proteins including NOP2/NOL1 and FBL. Also interacts with nucleolar protein NPM1/B23. Interacts with splicing factor SRSF1 and with LUC7L3/CROP. Interacts with GTPase activator SIPA1. Interacts with CBX5/HP1alpha, H1-10, NCL, PARP1, TRIM28 and YBX3. As to quaternary structure, (Microbial infection) Interacts with influenza A virus nucleoprotein NP and with RNA-directed RNA polymerase subunits PB1 and PB2. Post-translationally, citrullinated by PADI4.

It localises to the nucleus. It is found in the nucleolus. The protein resides in the nucleoplasm. The protein localises to the chromosome. Functionally, positively regulates DNA damage-induced apoptosis by acting as a transcriptional coactivator of proapoptotic target genes of the transcriptional activator E2F1. Likely to play a role in ribosome biogenesis by targeting serine/threonine protein phosphatase PP1 to the nucleolus. Involved in regulation of mRNA splicing. Inhibits SIPA1 GTPase activity. Involved in regulating expression of extracellular matrix genes. Associates with chromatin and may play a role in modulating chromatin structure. Its function is as follows. (Microbial infection) Following influenza A virus (IAV) infection, promotes viral mRNA transcription by facilitating the binding of IAV RNA-directed RNA polymerase to capped mRNA. The chain is Ribosomal RNA processing protein 1 homolog B (RRP1B) from Homo sapiens (Human).